The sequence spans 312 residues: MLLVKMTTHIFNADELLQALQQAKAEKNFSSVFSLDWDKLRTAKRNTTVKYVTVNVIVKGKKAPLMFNFQNEKHVGTIPPSTDEEVIRMNAENPKFLVKKRDRDPCLQFNKYKISPPLEDDGLTVKKNEQGEEIYPGDEEKSKLFQIIELLEEAFEDAVQKGPETMKTKHVIKLIQRKISNSAAKNADKPLPNPIARIRIKINSGTNILTPILLNKSKPITLQNGKTSFEELKDEDGVKANPDNIHKLIESHSIHDGIINARSICISNMGISFPLCLEMGVVKVFEKNNGINVDSIYSSDDISTLVNQIAIA.

It belongs to the asfivirus CP312R family.

The protein resides in the virion. This is an uncharacterized protein from African swine fever virus (isolate Tick/South Africa/Pretoriuskop Pr4/1996) (ASFV).